The primary structure comprises 277 residues: Transmembrane protein 53 (277 aa).

The helical transmembrane segment at 171–191 (LLLLVAFALVVVLFHVLLAPI) threads the bilayer.

It belongs to the TMEM53 family. As to expression, widely expressed.

Its subcellular location is the nucleus outer membrane. Its function is as follows. Ensures normal bone formation, through the negative regulation of bone morphogenetic protein (BMP) signaling in osteoblast lineage cells by blocking cytoplasm-nucleus translocation of phosphorylated SMAD1/5/9 proteins. The chain is Transmembrane protein 53 (TMEM53) from Homo sapiens (Human).